The primary structure comprises 234 residues: Acetylxylan esterase 2 (234 aa).

The N-terminal stretch at 1–17 is a signal peptide; sequence MHSKFFAASLLGLGAAA. Residues 18 to 27 constitute a propeptide that is removed on maturation; sequence IPLEGVMEKR. Disulfide bonds link cysteine 29-cysteine 106 and cysteine 73-cysteine 79. Serine 117 is an active-site residue. Disulfide bonds link cysteine 128–cysteine 188, cysteine 174–cysteine 206, and cysteine 198–cysteine 205. Residue aspartate 202 is part of the active site. N-linked (GlcNAc...) asparagine glycosylation occurs at asparagine 207. Residue histidine 214 is part of the active site.

It belongs to the cutinase family. Acetylxylan esterase subfamily. In terms of assembly, monomer.

It localises to the secreted. The enzyme catalyses Deacetylation of xylans and xylo-oligosaccharides.. The protein operates within glycan degradation; xylan degradation. Degrades acetylated xylans by cleaving acetyl side groups from the hetero-xylan backbone. This is Acetylxylan esterase 2 (axe-2) from Talaromyces purpureogenus (Soft rot fungus).